Consider the following 349-residue polypeptide: Aspartate-semialdehyde dehydrogenase (349 aa).

NADP(+)-binding positions include 12–15 and 39–40; these read TGSV and NS. Arg113 serves as a coordination point for phosphate. Catalysis depends on Cys148, which acts as the Acyl-thioester intermediate. Gln175 serves as a coordination point for substrate. 178–179 provides a ligand contact to NADP(+); the sequence is SG. A substrate-binding site is contributed by Glu201. Phosphate is bound at residue Lys204. Arg234 provides a ligand contact to substrate. The active-site Proton acceptor is the His241. Residue 326–327 coordinates NADP(+); it reads NT.

It belongs to the aspartate-semialdehyde dehydrogenase family. In terms of assembly, homodimer.

The enzyme catalyses L-aspartate 4-semialdehyde + phosphate + NADP(+) = 4-phospho-L-aspartate + NADPH + H(+). The protein operates within amino-acid biosynthesis; L-lysine biosynthesis via DAP pathway; (S)-tetrahydrodipicolinate from L-aspartate: step 2/4. It functions in the pathway amino-acid biosynthesis; L-methionine biosynthesis via de novo pathway; L-homoserine from L-aspartate: step 2/3. It participates in amino-acid biosynthesis; L-threonine biosynthesis; L-threonine from L-aspartate: step 2/5. Its function is as follows. Catalyzes the NADPH-dependent formation of L-aspartate-semialdehyde (L-ASA) by the reductive dephosphorylation of L-aspartyl-4-phosphate. This chain is Aspartate-semialdehyde dehydrogenase, found in Leptospira interrogans serogroup Icterohaemorrhagiae serovar copenhageni (strain Fiocruz L1-130).